Here is a 227-residue protein sequence, read N- to C-terminus: Probable cytokinin riboside 5'-monophosphate phosphoribohydrolase LOGL9 (227 aa).

The span at 1–15 (MYISSPHTSHFTSID) shows a compositional bias: polar residues. Residues 1 to 26 (MYISSPHTSHFTSIDRSPAVVSESDR) are disordered. Residues Glu117, 135–136 (RK), and 152–158 (GYGTLEE) each bind substrate.

The protein belongs to the LOG family. As to expression, expressed in roots, leaves and stems.

The enzyme catalyses N(6)-(dimethylallyl)adenosine 5'-phosphate + H2O = N(6)-dimethylallyladenine + D-ribose 5-phosphate. The catalysed reaction is 9-ribosyl-trans-zeatin 5'-phosphate + H2O = trans-zeatin + D-ribose 5-phosphate. Cytokinin-activating enzyme working in the direct activation pathway. Phosphoribohydrolase that converts inactive cytokinin nucleotides to the biologically active free-base forms. This Oryza sativa subsp. japonica (Rice) protein is Probable cytokinin riboside 5'-monophosphate phosphoribohydrolase LOGL9 (LOGL9).